We begin with the raw amino-acid sequence, 329 residues long: 4-hydroxythreonine-4-phosphate dehydrogenase (329 aa).

Histidine 136 and threonine 137 together coordinate substrate. A divalent metal cation is bound by residues histidine 166, histidine 211, and histidine 266. Lysine 274, asparagine 283, and arginine 292 together coordinate substrate.

Belongs to the PdxA family. As to quaternary structure, homodimer. Zn(2+) serves as cofactor. It depends on Mg(2+) as a cofactor. Co(2+) is required as a cofactor.

It is found in the cytoplasm. The enzyme catalyses 4-(phosphooxy)-L-threonine + NAD(+) = 3-amino-2-oxopropyl phosphate + CO2 + NADH. The protein operates within cofactor biosynthesis; pyridoxine 5'-phosphate biosynthesis; pyridoxine 5'-phosphate from D-erythrose 4-phosphate: step 4/5. Its function is as follows. Catalyzes the NAD(P)-dependent oxidation of 4-(phosphooxy)-L-threonine (HTP) into 2-amino-3-oxo-4-(phosphooxy)butyric acid which spontaneously decarboxylates to form 3-amino-2-oxopropyl phosphate (AHAP). The polypeptide is 4-hydroxythreonine-4-phosphate dehydrogenase (Escherichia coli O7:K1 (strain IAI39 / ExPEC)).